A 255-amino-acid polypeptide reads, in one-letter code: 2-succinyl-6-hydroxy-2,4-cyclohexadiene-1-carboxylate synthase (255 aa).

The protein belongs to the AB hydrolase superfamily. MenH family. Monomer.

The enzyme catalyses 5-enolpyruvoyl-6-hydroxy-2-succinyl-cyclohex-3-ene-1-carboxylate = (1R,6R)-6-hydroxy-2-succinyl-cyclohexa-2,4-diene-1-carboxylate + pyruvate. It participates in quinol/quinone metabolism; 1,4-dihydroxy-2-naphthoate biosynthesis; 1,4-dihydroxy-2-naphthoate from chorismate: step 3/7. Its pathway is quinol/quinone metabolism; menaquinone biosynthesis. In terms of biological role, catalyzes a proton abstraction reaction that results in 2,5-elimination of pyruvate from 2-succinyl-5-enolpyruvyl-6-hydroxy-3-cyclohexene-1-carboxylate (SEPHCHC) and the formation of 2-succinyl-6-hydroxy-2,4-cyclohexadiene-1-carboxylate (SHCHC). The polypeptide is 2-succinyl-6-hydroxy-2,4-cyclohexadiene-1-carboxylate synthase (Serratia proteamaculans (strain 568)).